Consider the following 544-residue polypeptide: Protein kinase dsk1 (544 aa).

The Protein kinase domain occupies 81-516 (YVVERKLGWG…AGYMSNSPWL (436 aa)). ATP is bound by residues 87–95 (LGWGHFSTV) and Lys110. Asp214 functions as the Proton acceptor in the catalytic mechanism. 2 disordered regions span residues 235–299 (PATT…SSPF) and 316–341 (ISLRDSQKHNSHPNSPFSSGDNSLIL). Positions 237–254 (TTSSPTSNTSSSKTRNNT) are enriched in low complexity. 2 stretches are compositionally biased toward polar residues: residues 281–299 (KNPTKNSKPAGQVIPSSPF) and 327–337 (HPNSPFSSGDN).

This sequence belongs to the protein kinase superfamily. Ser/Thr protein kinase family. In terms of processing, phosphorylated on Ser residue(s).

The protein resides in the cytoplasm. The protein localises to the nucleus. The enzyme catalyses L-seryl-[protein] + ATP = O-phospho-L-seryl-[protein] + ADP + H(+). The catalysed reaction is L-threonyl-[protein] + ATP = O-phospho-L-threonyl-[protein] + ADP + H(+). Functionally, may play an important role in mitotic control by altering cellular location, degree of phosphorylation and kinase activity. Abundant expression accelerates the exit when cells are in M-phase and also delays the entry into mitosis when cells are in G2. Phosphorylates prp2 in vitro and so may have a role in co-ordinating pre-mRNA splicing with the progression of the cell division cycle. This Schizosaccharomyces pombe (strain 972 / ATCC 24843) (Fission yeast) protein is Protein kinase dsk1 (dsk1).